The primary structure comprises 850 residues: MALPIEGKLSMANNRIERLKSPSSSSTCSMDEVLITSSNNSSSICLETMRQLPREGVSGQINIIKETAASSSSHAALFIKQDLYEHIDPLPAYPPSYDLVNPNKEVRFPIFGDTAPCPKSSLPPLYAPAVYELTLISLKLERLSPYEISSNRSWRNFIIEINSTQLNFYHIDESLTKHIRNYSSGETKSEKEDRIHSDLVHRSDQSQHLHHRLFTLPTRSASEFKKADQERISYRVKRDRSRYLTDEALYKSFTLQNARFGIPTDYTKKSFVLRMSCESEQFLLRFSHIDDMIDWSMYLSIGISVSLDLEVREYPDYRIVPRRRRRRRRRRRRRRHTHRSESSMGSFSQRFIRSNSRPDLIQRYSTGSSTNNNTTIRERSNTFTAGLLDHYCTGLSKTPTEALISSAASGESSDNSTLGSTRSLSGCSASRSIASRSLKFKIKNFFRPKNSSRTEKLHRLRSNSSNLNSVIETEEDDEHHESSGGDHPEPGVPVNTTIKVERPMHRNRAISMPQRQSLRRAISEEVVPIKFPNSTVGESVHSPSPIEHLSVDGCEIMLQSQNAVMKEELRSVASNLVANERDEASIRPKPQSSSIYLSGLAPNGESATDLSQSSRSLCLTNRDAEINDDESATETDEDENDGETDEYAGDDTNDDTDDSNIGYAYGSESDYSCLIEERIRNRRRASSTLSCFSNIPYGTDDIKWKPAIKEISRRRYLRDSLKCIKPFLDSNDCLGKVIYIPVSGPTFETSNKIHFSNRQSLQKQKNHFLKGFIVGPTALIELNCKNKNAIVGTTKDAEDHGEDDGDGDDGEDDDDDDDDDDDDDDDEDDDDDDDDDDDDDDDDDDGQITA.

In terms of domain architecture, PH spans arginine 194–serine 306. Over residues arginine 324 to histidine 338 the composition is skewed to basic residues. 5 disordered regions span residues arginine 324–serine 348, serine 406–serine 428, serine 451–valine 494, glutamate 583–serine 659, and threonine 793–alanine 850. A compositionally biased stretch (low complexity) spans serine 406 to serine 416. Residues threonine 417–serine 428 show a composition bias toward polar residues. The span at histidine 479–glutamate 489 shows a compositional bias: basic and acidic residues. A compositionally biased stretch (polar residues) spans glutamate 605 to leucine 619. Acidic residues-rich tracts occupy residues isoleucine 626 to aspartate 658 and aspartate 799 to alanine 850.

It is found in the cytoplasm. The sequence is that of PH domain-containing protein YHR131C from Saccharomyces cerevisiae (strain ATCC 204508 / S288c) (Baker's yeast).